A 172-amino-acid polypeptide reads, in one-letter code: Shikimate kinase (172 aa).

An ATP-binding site is contributed by 11–16 (GAGKST). Ser-15 is a binding site for Mg(2+). Residues Asp-33, Arg-57, and Gly-79 each coordinate substrate. Residue Arg-117 coordinates ATP. Arg-136 is a binding site for substrate. Residue Arg-153 coordinates ATP.

Belongs to the shikimate kinase family. Monomer. The cofactor is Mg(2+).

Its subcellular location is the cytoplasm. It catalyses the reaction shikimate + ATP = 3-phosphoshikimate + ADP + H(+). It functions in the pathway metabolic intermediate biosynthesis; chorismate biosynthesis; chorismate from D-erythrose 4-phosphate and phosphoenolpyruvate: step 5/7. Catalyzes the specific phosphorylation of the 3-hydroxyl group of shikimic acid using ATP as a cosubstrate. This is Shikimate kinase from Pseudomonas syringae pv. syringae (strain B728a).